A 331-amino-acid polypeptide reads, in one-letter code: Ketol-acid reductoisomerase (NADP(+)) (331 aa).

Residues alanine 2 to threonine 182 form the KARI N-terminal Rossmann domain. Residues tyrosine 25 to glutamine 28, serine 51, serine 53, and aspartate 83 to glutamine 86 each bind NADP(+). Residue histidine 108 is part of the active site. Glycine 134 contributes to the NADP(+) binding site. The KARI C-terminal knotted domain maps to asparagine 183–leucine 328. Mg(2+)-binding residues include aspartate 191, glutamate 195, glutamate 227, and glutamate 231. Serine 252 contributes to the substrate binding site.

It belongs to the ketol-acid reductoisomerase family. Mg(2+) serves as cofactor.

It carries out the reaction (2R)-2,3-dihydroxy-3-methylbutanoate + NADP(+) = (2S)-2-acetolactate + NADPH + H(+). It catalyses the reaction (2R,3R)-2,3-dihydroxy-3-methylpentanoate + NADP(+) = (S)-2-ethyl-2-hydroxy-3-oxobutanoate + NADPH + H(+). It functions in the pathway amino-acid biosynthesis; L-isoleucine biosynthesis; L-isoleucine from 2-oxobutanoate: step 2/4. Its pathway is amino-acid biosynthesis; L-valine biosynthesis; L-valine from pyruvate: step 2/4. Its function is as follows. Involved in the biosynthesis of branched-chain amino acids (BCAA). Catalyzes an alkyl-migration followed by a ketol-acid reduction of (S)-2-acetolactate (S2AL) to yield (R)-2,3-dihydroxy-isovalerate. In the isomerase reaction, S2AL is rearranged via a Mg-dependent methyl migration to produce 3-hydroxy-3-methyl-2-ketobutyrate (HMKB). In the reductase reaction, this 2-ketoacid undergoes a metal-dependent reduction by NADPH to yield (R)-2,3-dihydroxy-isovalerate. This is Ketol-acid reductoisomerase (NADP(+)) from Prochlorococcus marinus (strain MIT 9313).